A 685-amino-acid chain; its full sequence is Mesothelin-like protein (685 aa).

An N-terminal signal peptide occupies residues 1–32 (MSRTLRPSAMGSRVGALASPGLALLLSLTAHC). The Extracellular portion of the chain corresponds to 33–627 (SGPQAKGLPK…GVSHTSGSPP (595 aa)). Asn-315 and Asn-400 each carry an N-linked (GlcNAc...) asparagine glycan. Residues 603–624 (PPSSLIHSLDPPGNDGVSHTSG) are disordered. A helical membrane pass occupies residues 628–648 (VHLGYLSLAVALPSSLLWLLL). Residues 649-685 (CQLPSGQMATAHRTLGPMALAQGSWTPEHQIPEKRSC) lie on the Cytoplasmic side of the membrane.

This sequence belongs to the mesothelin family.

It localises to the membrane. May play a role in cellular adhesion. The protein is Mesothelin-like protein (Mslnl) of Mus musculus (Mouse).